The following is a 477-amino-acid chain: Glycogen synthase (477 aa).

K15 serves as a coordination point for ADP-alpha-D-glucose.

It belongs to the glycosyltransferase 1 family. Bacterial/plant glycogen synthase subfamily.

It carries out the reaction [(1-&gt;4)-alpha-D-glucosyl](n) + ADP-alpha-D-glucose = [(1-&gt;4)-alpha-D-glucosyl](n+1) + ADP + H(+). It participates in glycan biosynthesis; glycogen biosynthesis. In terms of biological role, synthesizes alpha-1,4-glucan chains using ADP-glucose. This is Glycogen synthase from Salmonella arizonae (strain ATCC BAA-731 / CDC346-86 / RSK2980).